The chain runs to 354 residues: Soluble interferon alpha/beta receptor OPG204 (354 aa).

The N-terminal stretch at 1-22 (MMKMTMKMMVHIYFVSLLLLLF) is a signal peptide. Ig-like C2-type domains follow at residues 68 to 150 (IGEP…RSHV) and 158 to 240 (PEIY…IVVS). 2 cysteine pairs are disulfide-bonded: Cys76/Cys132 and Cys175/Cys224. N-linked (GlcNAc...) asparagine; by host glycans are attached at residues Asn120, Asn124, Asn185, Asn272, and Asn324. The 100-residue stretch at 249–348 (PSQDHRFKLI…HNYYFEKTLT (100 aa)) folds into the Ig-like V-type domain. Cysteines 275 and 336 form a disulfide.

It belongs to the interleukin-1 receptor family. In terms of assembly, interacts with host IFNA1.

Its subcellular location is the secreted. Counteracts the antiviral effects of host IFN-alpha/beta and key IFN-inducible proteins involved in viral RNA degradation suxh as host OAS1. Acts as a soluble IFN-alpha receptor and thus inhibits the interaction between host IFN-alpha and its receptor. This is Soluble interferon alpha/beta receptor OPG204 (OPG204) from Homo sapiens (Human).